Reading from the N-terminus, the 97-residue chain is Coiled-coil domain-containing protein 167 (97 aa).

Residues 10-79 (GVALEIDGLE…LRQENRKNML (70 aa)) adopt a coiled-coil conformation. The chain crosses the membrane as a helical span at residues 78–95 (MLLSVAIFILLTLVYAYW).

It is found in the membrane. The protein is Coiled-coil domain-containing protein 167 (CCDC167) of Homo sapiens (Human).